The chain runs to 147 residues: uncharacterized protein (147 aa).

A helical transmembrane segment spans residues 71–91; that stretch reads IDILAFVAGTVGVGSLVLLQF.

The protein resides in the virion. It is found in the host membrane. This is an uncharacterized protein from Acanthamoeba polyphaga mimivirus (APMV).